Consider the following 218-residue polypeptide: DNA endonuclease I-CeuI (218 aa).

G65 and E66 together coordinate Mg(2+). Residues 71–75 are interaction with DNA; the sequence is ISTKK. Mg(2+) is bound at residue D86. Interaction with DNA stretches follow at residues 90–94, 114–116, and 191–199; these read NVTQH, RHK, and KQQGQSNEG.

Belongs to the LAGLIDADG endonuclease family. As to quaternary structure, homodimer. The cofactor is Mg(2+).

It is found in the plastid. It localises to the chloroplast. Endonuclease involved in intron homing. Recognizes a degenerate sequence of 17-19 bp to produce a staggered cut 5 bp downstream from the CeLSU.5 intron insertion site. This Chlamydomonas moewusii (Chlamydomonas eugametos) protein is DNA endonuclease I-CeuI.